The chain runs to 217 residues: dITP/XTP pyrophosphatase (217 aa).

Residue 7–12 (SRNKKK) coordinates substrate. Residue D72 is the Proton acceptor of the active site. Position 72 (D72) interacts with Mg(2+). Residues S73, 163–166 (FGYD), K195, and 200–201 (HR) each bind substrate.

It belongs to the HAM1 NTPase family. As to quaternary structure, homodimer. Mg(2+) is required as a cofactor.

It carries out the reaction XTP + H2O = XMP + diphosphate + H(+). The catalysed reaction is dITP + H2O = dIMP + diphosphate + H(+). It catalyses the reaction ITP + H2O = IMP + diphosphate + H(+). Functionally, pyrophosphatase that catalyzes the hydrolysis of nucleoside triphosphates to their monophosphate derivatives, with a high preference for the non-canonical purine nucleotides XTP (xanthosine triphosphate), dITP (deoxyinosine triphosphate) and ITP. Seems to function as a house-cleaning enzyme that removes non-canonical purine nucleotides from the nucleotide pool, thus preventing their incorporation into DNA/RNA and avoiding chromosomal lesions. The chain is dITP/XTP pyrophosphatase from Corynebacterium jeikeium (strain K411).